A 153-amino-acid polypeptide reads, in one-letter code: Biogenesis of lysosome-related organelles complex 1 subunit 1 (153 aa).

Over residues Met-1–Ser-11 the composition is skewed to basic and acidic residues. The interval Met-1–Val-27 is disordered. A coiled-coil region spans residues Val-27 to Ala-59.

It belongs to the BLOC1S1 family. In terms of assembly, component of the biogenesis of lysosome-related organelles complex 1 (BLOC-1) composed of BLOC1S1, BLOC1S2, BLOC1S3, BLOC1S4, BLOC1S5, BLOC1S6, DTNBP1/BLOC1S7 and SNAPIN/BLOC1S8. Octamer composed of one copy each BLOC1S1, BLOC1S2, BLOC1S3, BLOC1S4, BLOC1S5, BLOC1S6, DTNBP1/BLOC1S7 and SNAPIN/BLOC1S8. The BLOC-1 complex associates with the AP-3 protein complex and membrane protein cargos. Component of the BLOC-one-related complex (BORC) which is composed of BLOC1S1, BLOC1S2, BORCS5, BORCS6, BORCS7, BORCS8, KXD1 and SNAPIN. Interacts with ATP5F1A and NDUFA9; involved in their acetylation on lysine residues. Interacts with KXD1.

It is found in the mitochondrion intermembrane space. The protein localises to the mitochondrion matrix. It localises to the cytoplasm. The protein resides in the cytosol. Its subcellular location is the lysosome membrane. The enzyme catalyses L-lysyl-[protein] + acetyl-CoA = N(6)-acetyl-L-lysyl-[protein] + CoA + H(+). Functionally, component of the BLOC-1 complex, a complex that is required for normal biogenesis of lysosome-related organelles (LRO), such as platelet dense granules and melanosomes. In concert with the AP-3 complex, the BLOC-1 complex is required to target membrane protein cargos into vesicles assembled at cell bodies for delivery into neurites and nerve terminals. The BLOC-1 complex, in association with SNARE proteins, is also proposed to be involved in neurite extension. As part of the BORC complex may play a role in lysosomes movement and localization at the cell periphery. Associated with the cytosolic face of lysosomes, the BORC complex may recruit ARL8B and couple lysosomes to microtubule plus-end-directed kinesin motor. In terms of biological role, acts as a protein acetyltransferase. Negatively regulates aerobic respiration through mitochondrial protein lysine-acetylation. May counteract the action of the deacetylase SIRT3 by acetylating and regulating proteins of the mitochondrial respiratory chain including ATP5F1A and NDUFA9. Acts as a regulator of mTORC2 signaling in response to hypotoxic stress by mediating acetylation of RICTOR, thereby protecting RICTOR against ubiquitination and subsequent degradation by the proteasome. This chain is Biogenesis of lysosome-related organelles complex 1 subunit 1 (BLOC1S1), found in Homo sapiens (Human).